The following is a 320-amino-acid chain: GDSL esterase/lipase At3g43570 (320 aa).

An N-terminal signal peptide occupies residues 1–19; it reads MKIQIIWLTLVLIVVEANA. N-linked (GlcNAc...) asparagine glycosylation is present at asparagine 25. Residue serine 37 is the Nucleophile of the active site. N-linked (GlcNAc...) asparagine glycosylation occurs at asparagine 287. Catalysis depends on residues aspartate 295 and histidine 298.

It belongs to the 'GDSL' lipolytic enzyme family.

It localises to the secreted. The polypeptide is GDSL esterase/lipase At3g43570 (Arabidopsis thaliana (Mouse-ear cress)).